The sequence spans 256 residues: Protein YIPF5 (256 aa).

Residues 1–125 (MSNFDNFNTD…ADGNIMNETD (125 aa)) lie on the Cytoplasmic side of the membrane. Residues 126-146 (LAGPMVFCLAFGATLLLAGKI) form a helical membrane-spanning segment. Position 147 (glutamine 147) is a topological domain, lumenal. A helical membrane pass occupies residues 148 to 168 (FGYVYGISAIGCLGMYCLLNL). Over 169 to 172 (MSMT) the chain is Cytoplasmic. The chain crosses the membrane as a helical span at residues 173–193 (GVSFGCVSSVLGYCLLPMIIL). At 194–195 (SS) the chain is on the lumenal side. The helical transmembrane segment at 196-216 (FAVIFSLQGILGIVLAALIIG) threads the bilayer. The Cytoplasmic segment spans residues 217–235 (WCSFSASKIFISALAMDGQ). A helical transmembrane segment spans residues 236 to 256 (QVLVAYPCALLYGVFALISVF).

This sequence belongs to the YIP1 family.

The protein resides in the endoplasmic reticulum membrane. It localises to the golgi apparatus. Its subcellular location is the cis-Golgi network membrane. Functionally, plays a role in transport between endoplasmic reticulum and Golgi. In Xenopus tropicalis (Western clawed frog), this protein is Protein YIPF5 (yipf5).